An 824-amino-acid chain; its full sequence is Leucine--tRNA ligase (824 aa).

Positions 41–51 match the 'HIGH' region motif; the sequence is PYPSGTLHVGH. The 'KMSKS' region motif lies at 580-584; that stretch reads KMSKS. Lys583 contacts ATP.

The protein belongs to the class-I aminoacyl-tRNA synthetase family.

It localises to the cytoplasm. The enzyme catalyses tRNA(Leu) + L-leucine + ATP = L-leucyl-tRNA(Leu) + AMP + diphosphate. In Thermotoga maritima (strain ATCC 43589 / DSM 3109 / JCM 10099 / NBRC 100826 / MSB8), this protein is Leucine--tRNA ligase.